The following is a 104-amino-acid chain: Large ribosomal subunit protein bL21 (104 aa).

This sequence belongs to the bacterial ribosomal protein bL21 family. Part of the 50S ribosomal subunit. Contacts protein L20.

Functionally, this protein binds to 23S rRNA in the presence of protein L20. The protein is Large ribosomal subunit protein bL21 of Streptococcus sanguinis (strain SK36).